An 89-amino-acid chain; its full sequence is Large ribosomal subunit protein bL27 (89 aa).

It belongs to the bacterial ribosomal protein bL27 family.

The sequence is that of Large ribosomal subunit protein bL27 from Cereibacter sphaeroides (strain ATCC 17029 / ATH 2.4.9) (Rhodobacter sphaeroides).